The following is a 96-amino-acid chain: Small ribosomal subunit protein bS6c (96 aa).

This sequence belongs to the bacterial ribosomal protein bS6 family.

The protein localises to the plastid. The protein resides in the chloroplast. Its function is as follows. Binds together with bS18 to 16S ribosomal RNA. In Trieres chinensis (Marine centric diatom), this protein is Small ribosomal subunit protein bS6c (rps6).